The primary structure comprises 540 residues: Chaperonin GroEL (540 aa).

Residues 30–33, Lys-51, 87–91, Gly-415, and Asp-496 contribute to the ATP site; these read TLGP and DGTTT.

Belongs to the chaperonin (HSP60) family. As to quaternary structure, forms a cylinder of 14 subunits composed of two heptameric rings stacked back-to-back. Interacts with the co-chaperonin GroES.

It localises to the cytoplasm. It catalyses the reaction ATP + H2O + a folded polypeptide = ADP + phosphate + an unfolded polypeptide.. In terms of biological role, together with its co-chaperonin GroES, plays an essential role in assisting protein folding. The GroEL-GroES system forms a nano-cage that allows encapsulation of the non-native substrate proteins and provides a physical environment optimized to promote and accelerate protein folding. The chain is Chaperonin GroEL from Thermodesulfovibrio yellowstonii (strain ATCC 51303 / DSM 11347 / YP87).